The primary structure comprises 314 residues: tRNA selenocysteine 1-associated protein 1 (314 aa).

2 consecutive RRM domains span residues 2-85 (NSLW…RSNY) and 94-173 (FSLF…LASS).

It belongs to the RRM TRSPAP family.

It is found in the nucleus. The protein localises to the cytoplasm. Its function is as follows. Involved in the early steps of selenocysteine biosynthesis and tRNA(Sec) charging to the later steps resulting in the cotranslational incorporation of selenocysteine into selenoproteins. The polypeptide is tRNA selenocysteine 1-associated protein 1 (Danio rerio (Zebrafish)).